We begin with the raw amino-acid sequence, 1567 residues long: Transmembrane protein 131 homolog (1567 aa).

An N-terminal signal peptide occupies residues 1 to 32 (MPTQVQMRPLLRIFAEPILLILIFLFTLGAKG). At 33 to 1049 (EKVLQETFLG…RPGWESSLKN (1017 aa)) the chain is on the lumenal side. Positions 55–228 (RLVPSRLDFG…TLKPVIRISF (174 aa)) are papD-L domain. N-linked (GlcNAc...) asparagine glycosylation is found at Asn84, Asn114, Asn168, Asn235, Asn316, Asn317, Asn342, Asn372, Asn409, Asn462, Asn563, Asn890, and Asn1013. Residues 1050 to 1070 (AALVVLLASFGLVLVAAVFDA) traverse the membrane as a helical segment. Topologically, residues 1071 to 1567 (KAIMVQQNAY…SQRNNHNHMN (497 aa)) are cytoplasmic. Residues 1096 to 1130 (RNIVKLQAEEAAAKAESVQQQQKVKNGQLKELRKR) adopt a coiled-coil conformation. 3 disordered regions span residues 1112 to 1337 (SVQQ…SPDA), 1364 to 1386 (PTDN…IGDN), and 1502 to 1567 (PGLE…NHMN). Composition is skewed to low complexity over residues 1132-1150 (VVNS…SPWS) and 1166-1183 (KTVV…APAA). Phosphoserine is present on residues Ser1201 and Ser1258. Over residues 1247-1259 (AKSSPPQQENISP) the composition is skewed to polar residues. Residues 1284–1298 (PGRERERERRSKDQK) are compositionally biased toward basic and acidic residues. Positions 1319–1331 (KLNFGQTTNSTSP) are enriched in polar residues. Composition is skewed to polar residues over residues 1507–1519 (SARQ…QEQV) and 1536–1561 (LPTQ…SQRN).

The protein belongs to the TMEM131 family. In terms of assembly, may interact (via PapD-L domain) with collagen proteins (via C-terminus); the interaction is direct and is involved in assembly and TRAPPIII ER-to-Golgi transport complex-dependent secretion of collagen.

It is found in the membrane. Collagen binding transmembrane protein involved in collagen secretion, probably by recruiting the ER-to-Golgi transport complex TRAPPIII. The sequence is that of Transmembrane protein 131 homolog from Drosophila melanogaster (Fruit fly).